A 492-amino-acid chain; its full sequence is N-succinylglutamate 5-semialdehyde dehydrogenase (492 aa).

Residue 220-225 (GSANTG) coordinates NAD(+). Active-site residues include glutamate 243 and cysteine 277.

The protein belongs to the aldehyde dehydrogenase family. AstD subfamily.

The catalysed reaction is N-succinyl-L-glutamate 5-semialdehyde + NAD(+) + H2O = N-succinyl-L-glutamate + NADH + 2 H(+). It functions in the pathway amino-acid degradation; L-arginine degradation via AST pathway; L-glutamate and succinate from L-arginine: step 4/5. Functionally, catalyzes the NAD-dependent reduction of succinylglutamate semialdehyde into succinylglutamate. In Escherichia coli O81 (strain ED1a), this protein is N-succinylglutamate 5-semialdehyde dehydrogenase.